A 424-amino-acid polypeptide reads, in one-letter code: Enolase (424 aa).

Position 163 (Q163) interacts with (2R)-2-phosphoglycerate. E204 functions as the Proton donor in the catalytic mechanism. The Mg(2+) site is built by D241, E284, and D311. (2R)-2-phosphoglycerate contacts are provided by K336, R365, S366, and K387. The active-site Proton acceptor is the K336.

Belongs to the enolase family. Mg(2+) is required as a cofactor.

The protein localises to the cytoplasm. It is found in the secreted. It localises to the cell surface. The catalysed reaction is (2R)-2-phosphoglycerate = phosphoenolpyruvate + H2O. The protein operates within carbohydrate degradation; glycolysis; pyruvate from D-glyceraldehyde 3-phosphate: step 4/5. In terms of biological role, catalyzes the reversible conversion of 2-phosphoglycerate (2-PG) into phosphoenolpyruvate (PEP). It is essential for the degradation of carbohydrates via glycolysis. The protein is Enolase of Dictyoglomus turgidum (strain DSM 6724 / Z-1310).